The following is a 152-amino-acid chain: Putative membrane protein insertion efficiency factor (152 aa).

Positions 81-152 are disordered; sequence AAGGYDPVPG…IVGSGRGPWV (72 aa).

This sequence belongs to the UPF0161 family.

It is found in the cell membrane. Could be involved in insertion of integral membrane proteins into the membrane. This Frankia casuarinae (strain DSM 45818 / CECT 9043 / HFP020203 / CcI3) protein is Putative membrane protein insertion efficiency factor.